The chain runs to 566 residues: Urease subunit alpha (566 aa).

The 439-residue stretch at 128–566 (GGIDSHVHFI…LPMAQRYFLF (439 aa)) folds into the Urease domain. The Ni(2+) site is built by H133, H135, and K216. N6-carboxylysine is present on K216. H218 provides a ligand contact to substrate. Ni(2+) is bound by residues H245 and H271. The active-site Proton donor is the H319. A Ni(2+)-binding site is contributed by D359.

The protein belongs to the metallo-dependent hydrolases superfamily. Urease alpha subunit family. As to quaternary structure, heterotrimer of UreA (gamma), UreB (beta) and UreC (alpha) subunits. Three heterotrimers associate to form the active enzyme. The cofactor is Ni cation. Post-translationally, carboxylation allows a single lysine to coordinate two nickel ions.

The protein localises to the cytoplasm. The catalysed reaction is urea + 2 H2O + H(+) = hydrogencarbonate + 2 NH4(+). It participates in nitrogen metabolism; urea degradation; CO(2) and NH(3) from urea (urease route): step 1/1. This chain is Urease subunit alpha, found in Nitrosococcus oceani (strain ATCC 19707 / BCRC 17464 / JCM 30415 / NCIMB 11848 / C-107).